A 570-amino-acid polypeptide reads, in one-letter code: Putative diflavin flavoprotein A 6 (570 aa).

The interval 38-231 (AKGTTANSYL…FPTRLYATGH (194 aa)) is zinc metallo-hydrolase. The 143-residue stretch at 260 to 402 (VALIYASAYG…AGTDFAQALK (143 aa)) folds into the Flavodoxin-like domain. Residues 421 to 570 (VGRIVGSLCV…VHHRKSGNHY (150 aa)) form a flavodoxin-reductase-like region.

In the N-terminal section; belongs to the zinc metallo-hydrolase group 3 family. The protein in the C-terminal section; belongs to the flavodoxin reductase family. Fe cation is required as a cofactor.

In terms of biological role, mediates electron transfer from NADH to oxygen, reducing it to water. This modular protein has 3 redox cofactors, in other organisms the same activity requires 2 or 3 proteins. This Nostoc sp. (strain PCC 7120 / SAG 25.82 / UTEX 2576) protein is Putative diflavin flavoprotein A 6 (dfa6).